Here is a 449-residue protein sequence, read N- to C-terminus: Methylenetetrahydrofolate--tRNA-(uracil-5-)-methyltransferase TrmFO (449 aa).

10–15 (GGGLAG) lines the FAD pocket.

The protein belongs to the MnmG family. TrmFO subfamily. The cofactor is FAD.

It is found in the cytoplasm. It carries out the reaction uridine(54) in tRNA + (6R)-5,10-methylene-5,6,7,8-tetrahydrofolate + NADH + H(+) = 5-methyluridine(54) in tRNA + (6S)-5,6,7,8-tetrahydrofolate + NAD(+). The catalysed reaction is uridine(54) in tRNA + (6R)-5,10-methylene-5,6,7,8-tetrahydrofolate + NADPH + H(+) = 5-methyluridine(54) in tRNA + (6S)-5,6,7,8-tetrahydrofolate + NADP(+). Catalyzes the folate-dependent formation of 5-methyl-uridine at position 54 (M-5-U54) in all tRNAs. This Sphingopyxis alaskensis (strain DSM 13593 / LMG 18877 / RB2256) (Sphingomonas alaskensis) protein is Methylenetetrahydrofolate--tRNA-(uracil-5-)-methyltransferase TrmFO.